The following is a 446-amino-acid chain: Ribosomal protein uS12 methylthiotransferase RimO (446 aa).

Positions 10-122 (KTLHMVSLGC…IDELVNEKRS (113 aa)) constitute an MTTase N-terminal domain. [4Fe-4S] cluster contacts are provided by Cys19, Cys53, Cys85, Cys154, Cys158, and Cys161. A Radical SAM core domain is found at 140–369 (TGSSYHAYVK…GEIISQTTQE (230 aa)). Residues 372 to 446 (ESEVGKTFEV…GDKLLATVIK (75 aa)) form the TRAM domain.

The protein belongs to the methylthiotransferase family. RimO subfamily. The cofactor is [4Fe-4S] cluster.

Its subcellular location is the cytoplasm. It carries out the reaction L-aspartate(89)-[ribosomal protein uS12]-hydrogen + (sulfur carrier)-SH + AH2 + 2 S-adenosyl-L-methionine = 3-methylsulfanyl-L-aspartate(89)-[ribosomal protein uS12]-hydrogen + (sulfur carrier)-H + 5'-deoxyadenosine + L-methionine + A + S-adenosyl-L-homocysteine + 2 H(+). Its function is as follows. Catalyzes the methylthiolation of an aspartic acid residue of ribosomal protein uS12. The protein is Ribosomal protein uS12 methylthiotransferase RimO of Aliarcobacter butzleri (strain RM4018) (Arcobacter butzleri).